Reading from the N-terminus, the 147-residue chain is Large ribosomal subunit protein uL15 (147 aa).

The span at 1-10 (MYLNTLSPNS) shows a compositional bias: polar residues. A disordered region spans residues 1–48 (MYLNTLSPNSKSHKKSKRVGRGIGSGFGKTSGRGHKGQKSRSGCKIRR). Residues 11 to 20 (KSHKKSKRVG) are compositionally biased toward basic residues. Residues 21–31 (RGIGSGFGKTS) are compositionally biased toward gly residues. Over residues 32–47 (GRGHKGQKSRSGCKIR) the composition is skewed to basic residues.

This sequence belongs to the universal ribosomal protein uL15 family. In terms of assembly, part of the 50S ribosomal subunit.

Its function is as follows. Binds to the 23S rRNA. The polypeptide is Large ribosomal subunit protein uL15 (Buchnera aphidicola subsp. Baizongia pistaciae (strain Bp)).